A 129-amino-acid chain; its full sequence is Small ribosomal subunit protein uS11 (129 aa).

Belongs to the universal ribosomal protein uS11 family. Part of the 30S ribosomal subunit. Interacts with proteins S7 and S18. Binds to IF-3.

Located on the platform of the 30S subunit, it bridges several disparate RNA helices of the 16S rRNA. Forms part of the Shine-Dalgarno cleft in the 70S ribosome. The chain is Small ribosomal subunit protein uS11 from Caulobacter sp. (strain K31).